A 363-amino-acid chain; its full sequence is Actin-related protein 7 (363 aa).

Methionine 1 bears the N-acetylmethionine mark.

Belongs to the actin family. Plant ARP7 subfamily. As to expression, mostly expressed in flowers, and, to a lower extent, in roots, seedlings, leaves and siliques (at protein level).

It is found in the nucleus. Its subcellular location is the cytoplasm. In terms of biological role, essential protein required during embryogenesis and all plant development stages, probably through a chromatin-mediated regulation of gene expression. The sequence is that of Actin-related protein 7 (ARP7) from Arabidopsis thaliana (Mouse-ear cress).